Consider the following 421-residue polypeptide: Serine--tRNA ligase (421 aa).

An L-serine-binding site is contributed by 229–231; it reads TSE. Residues 260–262 and V276 each bind ATP; that span reads RKE. E283 serves as a coordination point for L-serine. An ATP-binding site is contributed by 347 to 350; sequence EIVS. T383 lines the L-serine pocket.

The protein belongs to the class-II aminoacyl-tRNA synthetase family. Type-1 seryl-tRNA synthetase subfamily. As to quaternary structure, homodimer. The tRNA molecule binds across the dimer.

It localises to the cytoplasm. It catalyses the reaction tRNA(Ser) + L-serine + ATP = L-seryl-tRNA(Ser) + AMP + diphosphate + H(+). It carries out the reaction tRNA(Sec) + L-serine + ATP = L-seryl-tRNA(Sec) + AMP + diphosphate + H(+). The protein operates within aminoacyl-tRNA biosynthesis; selenocysteinyl-tRNA(Sec) biosynthesis; L-seryl-tRNA(Sec) from L-serine and tRNA(Sec): step 1/1. Its function is as follows. Catalyzes the attachment of serine to tRNA(Ser). Is also able to aminoacylate tRNA(Sec) with serine, to form the misacylated tRNA L-seryl-tRNA(Sec), which will be further converted into selenocysteinyl-tRNA(Sec). This is Serine--tRNA ligase from Nitrosopumilus maritimus (strain SCM1).